The sequence spans 298 residues: N-acetylmuramic acid 6-phosphate etherase (298 aa).

The SIS domain maps to 55–218; sequence ASKRYREGGR…STGVMIKQGK (164 aa). Glu83 functions as the Proton donor in the catalytic mechanism. Glu114 is an active-site residue.

Belongs to the GCKR-like family. MurNAc-6-P etherase subfamily. In terms of assembly, homodimer.

It catalyses the reaction N-acetyl-D-muramate 6-phosphate + H2O = N-acetyl-D-glucosamine 6-phosphate + (R)-lactate. The protein operates within amino-sugar metabolism; N-acetylmuramate degradation. In terms of biological role, specifically catalyzes the cleavage of the D-lactyl ether substituent of MurNAc 6-phosphate, producing GlcNAc 6-phosphate and D-lactate. This is N-acetylmuramic acid 6-phosphate etherase from Lactobacillus johnsonii (strain CNCM I-12250 / La1 / NCC 533).